The following is a 1054-amino-acid chain: Bifunctional glutamine synthetase adenylyltransferase/adenylyl-removing enzyme (1054 aa).

An adenylyl removase region spans residues 1–535 (MRKTLPSIGA…LHRKLFYRPL (535 aa)). Polar residues-rich tracts occupy residues 138-150 (SFSS…QGSD) and 165-175 (DTANTDLSTPG). Residues 138–175 (SFSSESQQPQGSDSDSEFSFGADLSADDTANTDLSTPG) are disordered. Positions 541 to 1054 (NISVGTLKLS…WGVDSIEHDY (514 aa)) are adenylyl transferase.

Belongs to the GlnE family. It depends on Mg(2+) as a cofactor.

It catalyses the reaction [glutamine synthetase]-O(4)-(5'-adenylyl)-L-tyrosine + phosphate = [glutamine synthetase]-L-tyrosine + ADP. It carries out the reaction [glutamine synthetase]-L-tyrosine + ATP = [glutamine synthetase]-O(4)-(5'-adenylyl)-L-tyrosine + diphosphate. Its function is as follows. Involved in the regulation of glutamine synthetase GlnA, a key enzyme in the process to assimilate ammonia. When cellular nitrogen levels are high, the C-terminal adenylyl transferase (AT) inactivates GlnA by covalent transfer of an adenylyl group from ATP to specific tyrosine residue of GlnA, thus reducing its activity. Conversely, when nitrogen levels are low, the N-terminal adenylyl removase (AR) activates GlnA by removing the adenylyl group by phosphorolysis, increasing its activity. The regulatory region of GlnE binds the signal transduction protein PII (GlnB) which indicates the nitrogen status of the cell. In Corynebacterium diphtheriae (strain ATCC 700971 / NCTC 13129 / Biotype gravis), this protein is Bifunctional glutamine synthetase adenylyltransferase/adenylyl-removing enzyme.